Consider the following 487-residue polypeptide: N-succinylglutamate 5-semialdehyde dehydrogenase (487 aa).

221-226 (GSSDTG) is an NAD(+) binding site. Catalysis depends on residues E244 and C278.

Belongs to the aldehyde dehydrogenase family. AstD subfamily.

The catalysed reaction is N-succinyl-L-glutamate 5-semialdehyde + NAD(+) + H2O = N-succinyl-L-glutamate + NADH + 2 H(+). Its pathway is amino-acid degradation; L-arginine degradation via AST pathway; L-glutamate and succinate from L-arginine: step 4/5. Catalyzes the NAD-dependent reduction of succinylglutamate semialdehyde into succinylglutamate. This Burkholderia orbicola (strain MC0-3) protein is N-succinylglutamate 5-semialdehyde dehydrogenase.